A 376-amino-acid polypeptide reads, in one-letter code: uncharacterized protein (376 aa).

The helical transmembrane segment at 19–39 (FVLISLILLLNLGLLLGIQIY) threads the bilayer.

The protein to S.pombe SpAC5H10.12c.

It localises to the cytoplasm. The protein resides in the nucleus. The protein localises to the membrane. This is an uncharacterized protein from Schizosaccharomyces pombe (strain 972 / ATCC 24843) (Fission yeast).